Reading from the N-terminus, the 862-residue chain is Cadherin-related family member 5 (862 aa).

The N-terminal stretch at M1–A28 is a signal peptide. Residues Q29–A671 are Extracellular-facing. N-linked (GlcNAc...) asparagine glycosylation is found at N36, N45, N135, N173, N201, N311, N408, N438, and N479. Cadherin domains are found at residues F40–F127, P128–F240, I252–F357, and S358–T462. The segment at I452 to E658 is disordered. The span at S461 to G500 shows a compositional bias: low complexity. A compositionally biased stretch (polar residues) spans L529–P652. 3 consecutive repeat copies span residues T545–S575, T576–S606, and T607–S636. The segment at T545 to T648 is 4 X 31 AA approximate tandem repeats. One copy of the 4; truncated repeat lies at T637–T648. The chain crosses the membrane as a helical span at residues V672 to I692. Residues H693–V862 are Cytoplasmic-facing. A mediates interaction with USH1C and MYO7B and is required for proper localization to microvilli tips and function in microvilli organization region spans residues H693–V862. 2 disordered regions span residues K706 to Y803 and L821 to V862. Phosphoserine occurs at positions 729, 751, and 755. The span at G739–Q768 shows a compositional bias: pro residues. T758 bears the Phosphothreonine mark. Residues S766 and S783 each carry the phosphoserine modification. The segment covering L791–G801 has biased composition (basic and acidic residues). Position 825 is a phosphothreonine (T825). A compositionally biased stretch (low complexity) spans D827 to E837. Residues S832, S834, and S836 each carry the phosphoserine modification.

As to quaternary structure, part of the IMAC/intermicrovillar adhesion complex/intermicrovillar tip-link complex composed of ANKS4B, MYO7B, USH1C, CDHR2 and CDHR5. Interacts (via cytoplasmic domain) with USH1C and MYO7B; required for proper localization of CDHR5 to microvilli tips and its function in brush border differentiation. N- and O-glycosylated. As to expression, expressed predominantly in kidney. Also detected in lung and small intestine.

Its subcellular location is the apical cell membrane. It localises to the cell projection. The protein resides in the microvillus membrane. Intermicrovillar adhesion molecule that forms, via its extracellular domain, calcium-dependent heterophilic complexes with CDHR2 on adjacent microvilli. Thereby, controls the packing of microvilli at the apical membrane of epithelial cells. Through its cytoplasmic domain, interacts with microvillus cytoplasmic proteins to form the intermicrovillar adhesion complex/IMAC. This complex plays a central role in microvilli and epithelial brush border differentiation. In Rattus norvegicus (Rat), this protein is Cadherin-related family member 5.